Reading from the N-terminus, the 285-residue chain is Bifunctional protein FolD (285 aa).

NADP(+) is bound by residues 165–167 (GRS) and serine 190.

This sequence belongs to the tetrahydrofolate dehydrogenase/cyclohydrolase family. Homodimer.

It carries out the reaction (6R)-5,10-methylene-5,6,7,8-tetrahydrofolate + NADP(+) = (6R)-5,10-methenyltetrahydrofolate + NADPH. It catalyses the reaction (6R)-5,10-methenyltetrahydrofolate + H2O = (6R)-10-formyltetrahydrofolate + H(+). It participates in one-carbon metabolism; tetrahydrofolate interconversion. In terms of biological role, catalyzes the oxidation of 5,10-methylenetetrahydrofolate to 5,10-methenyltetrahydrofolate and then the hydrolysis of 5,10-methenyltetrahydrofolate to 10-formyltetrahydrofolate. The protein is Bifunctional protein FolD of Burkholderia cenocepacia (strain HI2424).